A 197-amino-acid chain; its full sequence is MSTYTIPNVIAQHPRGGERITDIYSHLLAERIVYLGTPIDSGVANALIAQLLHLESESPDQEINFYINCEGGDLPSMLAVYDTMQHIGAPVHTTCVGQAIAVGAVLLAGGAPGQRAMLPHARVVLHQPAARGQGPIPDLILQADELVRMRSEIEAILSRHTGRSPEQLREDTDRDRVFTATAALEYGLIDTVLSPRG.

Histidine 126 is a catalytic residue.

It belongs to the peptidase S14 family. Fourteen ClpP subunits assemble into 2 heptameric rings which stack back to back to give a disk-like structure with a central cavity, resembling the structure of eukaryotic proteasomes.

Its subcellular location is the cytoplasm. The catalysed reaction is Hydrolysis of proteins to small peptides in the presence of ATP and magnesium. alpha-casein is the usual test substrate. In the absence of ATP, only oligopeptides shorter than five residues are hydrolyzed (such as succinyl-Leu-Tyr-|-NHMec, and Leu-Tyr-Leu-|-Tyr-Trp, in which cleavage of the -Tyr-|-Leu- and -Tyr-|-Trp bonds also occurs).. In terms of biological role, cleaves peptides in various proteins in a process that requires ATP hydrolysis. Has a chymotrypsin-like activity. Plays a major role in the degradation of misfolded proteins. In Nocardia farcinica (strain IFM 10152), this protein is ATP-dependent Clp protease proteolytic subunit 1.